A 212-amino-acid polypeptide reads, in one-letter code: Large ribosomal subunit protein uL3 (212 aa).

Positions 134–154 are disordered; sequence RKTHGNSVSHRVPGSIGQNQT. Gln153 carries the N5-methylglutamine modification.

Belongs to the universal ribosomal protein uL3 family. Part of the 50S ribosomal subunit. Forms a cluster with proteins L14 and L19. Methylated by PrmB.

Its function is as follows. One of the primary rRNA binding proteins, it binds directly near the 3'-end of the 23S rRNA, where it nucleates assembly of the 50S subunit. In Dichelobacter nodosus (strain VCS1703A), this protein is Large ribosomal subunit protein uL3.